A 767-amino-acid polypeptide reads, in one-letter code: Transferrin receptor protein 1 (767 aa).

Topologically, residues 1–67 are cytoplasmic; sequence MDQARSAFSN…LTKPKRFNGS (67 aa). Serine 9 and serine 18 each carry phosphoserine. A Phosphotyrosine modification is found at tyrosine 19. Residues 19 to 22 carry the Endocytosis signal motif; sequence YTRF. Threonine 20 carries the phosphothreonine modification. Position 23 is a phosphoserine (serine 23). The Stop-transfer sequence motif lies at 60 to 63; the sequence is KPKR. The helical; Signal-anchor for type II membrane protein transmembrane segment at 68–88 threads the bilayer; that stretch reads FCYAVIAVIIFFLIGFMIGYL. Cysteine 69 is lipidated: S-palmitoyl cysteine. The Extracellular portion of the chain corresponds to 89–767; that stretch reads GYCKRVEPKS…GDIWDIDNEF (679 aa). Basic and acidic residues predominate over residues 96 to 110; that stretch reads PKSECGRSGDSKEIE. The segment at 96 to 122 is disordered; it reads PKSECGRSGDSKEIEGTEPPETEEYFP. Acidic residues predominate over residues 111–121; it reads GTEPPETEEYF. N-linked (GlcNAc...) asparagine glycosylation is found at asparagine 211, asparagine 258, and asparagine 324. The PA domain occupies 230 to 320; the sequence is SKATTVTGKL…GTGDPYTPGF (91 aa). A ligand-binding region spans residues 576–767; sequence TMDTYEVLSQ…GDIWDIDNEF (192 aa). The Cell attachment site motif lies at 653-655; sequence RGD. Asparagine 734 carries an N-linked (GlcNAc...) asparagine glycan.

It belongs to the peptidase M28 family. M28B subfamily. In terms of assembly, homodimer; disulfide-linked. Binds one transferrin or HFE molecule per subunit. Interacts with SH3BP4. Interacts with STEAP3; facilitates TFRC endocytosis in erythroid precursor cells. Post-translationally, stearoylated by ZDHHC6 which inhibits TFRC-mediated activation of the JNK pathway and promotes mitochondrial fragmentation. Stearoylation does not affect iron uptake.

The protein resides in the cell membrane. Its subcellular location is the melanosome. Its function is as follows. Cellular uptake of iron occurs via receptor-mediated endocytosis of ligand-occupied transferrin receptor into specialized endosomes. Endosomal acidification leads to iron release. The apotransferrin-receptor complex is then recycled to the cell surface with a return to neutral pH and the concomitant loss of affinity of apotransferrin for its receptor. Transferrin receptor is necessary for development of erythrocytes and the nervous system. Positively regulates T and B cell proliferation through iron uptake. Acts as a lipid sensor that regulates mitochondrial fusion by regulating activation of the JNK pathway. When dietary levels of stearate (C18:0) are low, promotes activation of the JNK pathway, resulting in HUWE1-mediated ubiquitination and subsequent degradation of the mitofusin MFN2 and inhibition of mitochondrial fusion. When dietary levels of stearate (C18:0) are high, TFRC stearoylation inhibits activation of the JNK pathway and thus degradation of the mitofusin MFN2. Mediates uptake of NICOL1 into fibroblasts where it may regulate extracellular matrix production. The chain is Transferrin receptor protein 1 (TFRC) from Equus caballus (Horse).